A 441-amino-acid polypeptide reads, in one-letter code: MSGSYDEASEEITDSFWEVGNYKRTVKRIDDGHRLCNDLMSCVQERAKIEKAYAQQLTDWAKRWRQLIEKGPQYGSLERAWGAMMTEADKVSELHQEVKNSLLNEDLEKVKNWQKDAYHKQIMGGFKETKEAEDGFRKAQKPWAKKMKELEAAKKAYHLACKEERLAMTREMNSKTEQSVTPEQQKKLVDKVDKCRQDVQKTQEKYEKVLEDVGKTTPQYMEGMEQVFEQCQQFEEKRLVFLKEVLLDIKRHLNLAENSSYMHVYRELEQAIRGADAQEDLRWFRSTSGPGMPMNWPQFEEWNPDLPHTTAKKEKQPKKAEGATLSNATGAVESTSQAGDRGSVSSYDRGQTYATEWSDDESGNPFGGNEANGGANPFEDDAKGVRVRALYDYDGQEQDELSFKAGDELTKLGEEDEQGWCRGRLDSGQLGLYPANYVEAI.

2 positions are modified to phosphoserine: Ser2 and Ser76. Residues 10-280 form the F-BAR domain; the sequence is EEITDSFWEV…AIRGADAQED (271 aa). Positions 23–272 form a coiled coil; it reads KRTVKRIDDG…HVYRELEQAI (250 aa). Position 181 is a phosphothreonine (Thr181). The interval 297–380 is disordered; sequence PQFEEWNPDL…ANGGANPFED (84 aa). The span at 311–321 shows a compositional bias: basic and acidic residues; sequence AKKEKQPKKAE. Polar residues predominate over residues 324–355; it reads TLSNATGAVESTSQAGDRGSVSSYDRGQTYAT. Ser343, Ser345, Ser346, Ser358, and Ser362 each carry phosphoserine. An SH3 domain is found at 382–441; sequence AKGVRVRALYDYDGQEQDELSFKAGDELTKLGEEDEQGWCRGRLDSGQLGLYPANYVEAI. Phosphotyrosine is present on Tyr391. Phosphoserine occurs at positions 402 and 427.

It belongs to the PACSIN family. Homodimer. May form heterooligomers with other PACSINs. Interacts with both COBL and DBNL. Identified in a complex composed of COBL, PACSIN1 and WASL. Interacts with EHD3. Interacts (via SH3 domain) with SYNJ1 and WASL. Interacts (via SH3 domain) with DNM1; the interaction is reduced by DNM1 phosphorylation. Interacts with DNM2 and DNM3. Interacts with MAPT. Interacts with EHD1. Interacts with TRPV4. Post-translationally, phosphorylated by casein kinase 2 (CK2) and protein kinase C (PKC). As to expression, highly expressed in brain. Detected in hippocampus and dorsal root ganglion neurons. Detected in rod photoreceptor terminals in the outer plexiform layer of the retina (at protein level). In CNS neurons, high levels in the pyramidal cells of the hippocampus, Purkinje cells of the cerebellum and large neurons of the cortex and brain stem.

Its subcellular location is the cytoplasm. It localises to the cell projection. The protein resides in the synapse. It is found in the synaptosome. The protein localises to the ruffle membrane. Its subcellular location is the membrane. It localises to the cytoplasmic vesicle membrane. The protein resides in the cytosol. It is found in the cell membrane. Functionally, binds to membranes via its F-BAR domain and mediates membrane tubulation. Plays a role in the reorganization of the microtubule cytoskeleton via its interaction with MAPT; this decreases microtubule stability and inhibits MAPT-induced microtubule polymerization. Plays a role in cellular transport processes by recruiting DNM1, DNM2 and DNM3 to membranes. Plays a role in the reorganization of the actin cytoskeleton and in neuron morphogenesis via its interaction with COBL and WASL, and by recruiting COBL to the cell cortex. Plays a role in the regulation of neurite formation, neurite branching and the regulation of neurite length. Required for normal synaptic vesicle endocytosis; this process retrieves previously released neurotransmitters to accommodate multiple cycles of neurotransmission. Required for normal excitatory and inhibitory synaptic transmission. This is Protein kinase C and casein kinase substrate in neurons protein 1 (Pacsin1) from Mus musculus (Mouse).